Here is a 207-residue protein sequence, read N- to C-terminus: Cytochrome c oxidase subunit 3 (207 aa).

5 helical membrane passes run 28-48 (FLGF…LFAT), 70-90 (VVFM…YAIY), 102-122 (LWFG…IYEF), 144-164 (LVGT…TLMI), and 186-206 (WHFI…MGMV).

Belongs to the cytochrome c oxidase subunit 3 family.

The protein localises to the cell membrane. The catalysed reaction is 4 Fe(II)-[cytochrome c] + O2 + 8 H(+)(in) = 4 Fe(III)-[cytochrome c] + 2 H2O + 4 H(+)(out). The chain is Cytochrome c oxidase subunit 3 (ctaE) from Bacillus sp. (strain PS3).